The sequence spans 183 residues: Peptide deformylase (183 aa).

Fe cation is bound by residues cysteine 110 and histidine 153. Glutamate 154 is an active-site residue. Histidine 157 lines the Fe cation pocket.

This sequence belongs to the polypeptide deformylase family. Fe(2+) is required as a cofactor.

The enzyme catalyses N-terminal N-formyl-L-methionyl-[peptide] + H2O = N-terminal L-methionyl-[peptide] + formate. Functionally, removes the formyl group from the N-terminal Met of newly synthesized proteins. Requires at least a dipeptide for an efficient rate of reaction. N-terminal L-methionine is a prerequisite for activity but the enzyme has broad specificity at other positions. This chain is Peptide deformylase, found in Shouchella clausii (strain KSM-K16) (Alkalihalobacillus clausii).